The sequence spans 436 residues: tRNA(Ile)-lysidine synthase (436 aa).

27–32 (SGGVDS) is an ATP binding site.

It belongs to the tRNA(Ile)-lysidine synthase family.

It is found in the cytoplasm. It carries out the reaction cytidine(34) in tRNA(Ile2) + L-lysine + ATP = lysidine(34) in tRNA(Ile2) + AMP + diphosphate + H(+). Ligates lysine onto the cytidine present at position 34 of the AUA codon-specific tRNA(Ile) that contains the anticodon CAU, in an ATP-dependent manner. Cytidine is converted to lysidine, thus changing the amino acid specificity of the tRNA from methionine to isoleucine. This Vibrio vulnificus (strain YJ016) protein is tRNA(Ile)-lysidine synthase.